A 331-amino-acid polypeptide reads, in one-letter code: N-arachidonyl glycine receptor (331 aa).

Topologically, residues 1 to 26 (MATLSNHNQLDLSNGSHPEEYKIAAL) are extracellular. A glycan (N-linked (GlcNAc...) asparagine) is linked at Asn14. Residues 27-47 (VFYSCIFLIGLFVNVTALWVF) traverse the membrane as a helical segment. Topologically, residues 48–56 (SCTTKKRTT) are cytoplasmic. The chain crosses the membrane as a helical span at residues 57–77 (VTIYMMNVALLDLVFILSLPF). Residues 78–95 (RMFYYAKGEWPFGEYFCH) lie on the Extracellular side of the membrane. The cysteines at positions 94 and 172 are disulfide-linked. Residues 96–116 (ILGALVVFYPSLALWLLAFIS) form a helical membrane-spanning segment. Over 117–138 (ADRYMAIVQPKYAKELKNTGKA) the chain is Cytoplasmic. Residues 139–159 (VLACGGVWVMTLTTTVPLLLL) traverse the membrane as a helical segment. At 160–191 (YEDPDKASSPATCLKISDITHLKAVNVLNFTR) the chain is on the extracellular side. N-linked (GlcNAc...) asparagine glycosylation is present at Asn188. The chain crosses the membrane as a helical span at residues 192 to 212 (LIFFFLIPLFIMIGCYVVIIH). The Cytoplasmic segment spans residues 213-236 (SLLRGQTSKLKPKVKEKSIRIIMT). Residues 237–257 (LLLQVLVCFVPFHICFAVLML) traverse the membrane as a helical segment. The Extracellular portion of the chain corresponds to 258–268 (QGQENSYSPWG). A helical membrane pass occupies residues 269–289 (AFTTFLMNLSTCLDVVLYYIV). At 290–331 (SKQFQARVISVMLYRNYLRSVRRKSVRSGSLRSLSNMNSEML) the chain is on the cytoplasmic side. Phosphoserine is present on Ser322.

It belongs to the G-protein coupled receptor 1 family. Expressed in the eye including cornea, retina, iris and ciliary epithelium (at protein level). Expressed in spleen, liver and lymphocytes with highest expression levels in intestinal intraepithelial lymphocytes.

The protein resides in the cell membrane. The protein localises to the cytoplasmic vesicle membrane. Functionally, g protein-coupled receptor (GPCR) that plays a role in diverse physiological processes particularly within the immune and nervous systems. Becomes active when triggered by various endogenous ligands including endocannabinoid N-arachidonyl glycine (NAGly), delta-9-tetrahydrocannabinol or resolvin D2/RvD2 derived from the omega-3 fatty acid docosahexaenoic acid (DHA). Upon RvD2 binding, facilitates the resolution of inflammation, aiding in tissue repair and homeostasis. Mechanistically, RvD2 ligation initiates Galphas protein coupling, activation of cAMP-PKA signaling pathway and phosphorylation of STAT3, leading to RvD2-stimulated macrophage phagocytosis. Mediates NAGly-induced process of reorganization of actin filaments and induction of acrosomal exocytosis. Activation by N-arachidonoyl glycine (NAGly) can also induce apoptosis in macrophages. Plays a role in homeostasis of CD8+ subsets of intraepithelial lymphocytes (IELs) (CD8alphaalpha and CD8alphabeta IELs) in small intestine by supporting preferential migration of CD8alphaalpha T-cells to intraepithelial compartment over lamina propria compartment, and by mediating their reconstitution into small intestine after bone marrow transplant. Also participates in hypotensive responses, mediating reduction in intraocular and blood pressure. The protein is N-arachidonyl glycine receptor of Mus musculus (Mouse).